The sequence spans 132 residues: Small ribosomal subunit protein uS8 (132 aa).

It belongs to the universal ribosomal protein uS8 family. As to quaternary structure, part of the 30S ribosomal subunit. Contacts proteins S5 and S12.

One of the primary rRNA binding proteins, it binds directly to 16S rRNA central domain where it helps coordinate assembly of the platform of the 30S subunit. The chain is Small ribosomal subunit protein uS8 from Streptococcus sanguinis (strain SK36).